The primary structure comprises 372 residues: Fatty acid 2-hydroxylase (372 aa).

A Cytochrome b5 heme-binding domain is found at 8–86 (AASFSPSEVQ…LEQYYVGELR (79 aa)). The heme site is built by histidine 43 and histidine 69. The next 2 membrane-spanning stretches (helical) occupy residues 168 to 188 (VWYSVPIIWVPLVLYLSWSYY) and 213 to 233 (SMFPGLFMLGTFLWSLIEYLI). Residues 219–361 (FMLGTFLWSL…TKLWDYCFHT (143 aa)) form the Fatty acid hydroxylase domain. Zn(2+)-binding residues include histidine 234, histidine 239, histidine 257, histidine 260, and histidine 261. 2 helical membrane-spanning segments follow: residues 268–288 (SRLVFPPVPASLVIGVFYLCM) and 290–310 (LILPEAVGGTVFAGGLLGYVL). Residues histidine 315, histidine 319, histidine 336, histidine 339, and histidine 340 each coordinate Zn(2+).

This sequence belongs to the sterol desaturase family. SCS7 subfamily. It depends on Zn(2+) as a cofactor. As to expression, detected in differentiating cultured keratinocytes (at protein level). Detected in epidermis and cultured keratinocytes. Highly expressed in brain and colon. Detected at lower levels in testis, prostate, pancreas and kidney.

Its subcellular location is the endoplasmic reticulum membrane. The protein localises to the microsome membrane. It carries out the reaction a 1,2-saturated fatty acid + 2 Fe(II)-[cytochrome b5] + O2 + 2 H(+) = a (R)-2-hydroxy fatty acid + 2 Fe(III)-[cytochrome b5] + H2O. The enzyme catalyses hexadecanoate + 2 Fe(II)-[cytochrome b5] + O2 + 2 H(+) = (R)-2-hydroxyhexadecanoate + 2 Fe(III)-[cytochrome b5] + H2O. The catalysed reaction is octadecanoate + 2 Fe(II)-[cytochrome b5] + O2 + 2 H(+) = (R)-2-hydroxyoctadecanoate + 2 Fe(III)-[cytochrome b5] + H2O. It catalyses the reaction docosanoate + 2 Fe(II)-[cytochrome b5] + O2 + 2 H(+) = 2-hydroxydocosanoate + 2 Fe(III)-[cytochrome b5] + H2O. It carries out the reaction tetracosanoate + 2 Fe(II)-[cytochrome b5] + O2 + 2 H(+) = (R)-2-hydroxytetracosanoate + 2 Fe(III)-[cytochrome b5] + H2O. Its pathway is lipid metabolism; fatty acid metabolism. The protein operates within sphingolipid metabolism; galactosylceramide biosynthesis. Functionally, catalyzes the hydroxylation of free fatty acids at the C-2 position to produce 2-hydroxy fatty acids, which are building blocks of sphingolipids and glycosphingolipids common in neural tissue and epidermis. FA2H is stereospecific for the production of (R)-2-hydroxy fatty acids. Plays an essential role in the synthesis of galactosphingolipids of the myelin sheath. Responsible for the synthesis of sphingolipids and glycosphingolipids involved in the formation of epidermal lamellar bodies critical for skin permeability barrier. Participates in the synthesis of glycosphingolipids and a fraction of type II wax diesters in sebaceous gland, specifically regulating hair follicle homeostasis. Involved in the synthesis of sphingolipids of plasma membrane rafts, controlling lipid raft mobility and trafficking of raft-associated proteins. The chain is Fatty acid 2-hydroxylase from Homo sapiens (Human).